Reading from the N-terminus, the 290-residue chain is Proteasome assembly chaperone 1 (290 aa).

Residues 1 to 39 (MAATFFGEVVKAPCRAGTEDEEEEEEEEGRRETPEDREV) are disordered. Ala-2 bears the N-acetylalanine mark. Residue Thr-18 is modified to Phosphothreonine. Positions 28–39 (EGRRETPEDREV) are enriched in basic and acidic residues. Phosphothreonine is present on Thr-56. Ser-182 is subject to Phosphoserine. At Lys-266 the chain carries N6-acetyllysine.

Belongs to the PSMG1 family. As to quaternary structure, forms a heterodimer with PSMG2. The PSMG1-PSMG2 heterodimer interacts directly with the PSMA5 and PSMA7 proteasome alpha subunits. In terms of processing, degraded by the proteasome upon completion of 20S proteasome maturation.

It is found in the cytoplasm. Its subcellular location is the endoplasmic reticulum. Its function is as follows. Chaperone protein which promotes assembly of the 20S proteasome as part of a heterodimer with PSMG2. The PSMG1-PSMG2 heterodimer binds to the PSMA5 and PSMA7 proteasome subunits, promotes assembly of the proteasome alpha subunits into the heteroheptameric alpha ring and prevents alpha ring dimerization. The polypeptide is Proteasome assembly chaperone 1 (PSMG1) (Papio anubis (Olive baboon)).